Reading from the N-terminus, the 249-residue chain is ATP synthase subunit a (249 aa).

The next 6 helical transmembrane spans lie at 30-50 (SAYM…GVAG), 84-104 (FFPL…VGII), 114-134 (LIVT…YGFY), 143-163 (IFVP…IEVF), 196-216 (LLAG…GMVI), and 221-241 (LELL…CIYL).

It belongs to the ATPase A chain family. F-type ATPases have 2 components, CF(1) - the catalytic core - and CF(0) - the membrane proton channel. CF(1) has five subunits: alpha(3), beta(3), gamma(1), delta(1), epsilon(1). CF(0) has four main subunits: a, b, b' and c.

The protein resides in the cell inner membrane. Key component of the proton channel; it plays a direct role in the translocation of protons across the membrane. This Rhodopseudomonas palustris (strain BisB18) protein is ATP synthase subunit a.